We begin with the raw amino-acid sequence, 743 residues long: Ectonucleotide pyrophosphatase/phosphodiesterase C27A7.3 (743 aa).

Over Met-1 to Lys-23 the chain is Cytoplasmic. The helical; Signal-anchor for type II membrane protein transmembrane segment at Ile-24–Val-44 threads the bilayer. At Ala-45–Trp-743 the chain is on the lumenal side. Asp-87 and Thr-123 together coordinate Zn(2+). Catalysis depends on Thr-123, which acts as the Nucleophile. An N-linked (GlcNAc...) asparagine glycan is attached at Asn-195. Zn(2+) contacts are provided by Asp-243, His-247, Asp-286, and His-287. 2 N-linked (GlcNAc...) asparagine glycosylation sites follow: Asn-293 and Asn-320. His-383 contacts Zn(2+). N-linked (GlcNAc...) asparagine glycans are attached at residues Asn-406, Asn-434, and Asn-536. Positions 635, 637, 639, 641, and 643 each coordinate Ca(2+). Asn-737 carries N-linked (GlcNAc...) asparagine glycosylation.

This sequence belongs to the nucleotide pyrophosphatase/phosphodiesterase family. Zn(2+) serves as cofactor. Ca(2+) is required as a cofactor.

Its subcellular location is the membrane. In terms of biological role, probable phosphodiesterase. The protein is Ectonucleotide pyrophosphatase/phosphodiesterase C27A7.3 of Caenorhabditis elegans.